We begin with the raw amino-acid sequence, 381 residues long: E3 ubiquitin-protein ligase At1g63170 (381 aa).

A disordered region spans residues 1 to 23 (MSRETTTEATPLILTDGGGGRRS). Transmembrane regions (helical) follow at residues 74 to 94 (VVVL…AVLV) and 107 to 127 (VWII…CVEY). The interval 135-161 (RRDLSPRSSSSSSSSSSSMDEEEGLGL) is disordered. Low complexity predominate over residues 140 to 152 (PRSSSSSSSSSSS). A coiled-coil region spans residues 170-194 (LELGQLENENNSFAKHLESANTMIS). Transmembrane regions (helical) follow at residues 189–209 (ANTM…SSGG), 224–244 (IVFL…ACVI), and 245–265 (GIAV…VAEQ). An RING-type; atypical zinc finger spans residues 325 to 366 (CCICLSAYEDETELRELPCGHHFHCGCVDKWLYINATCPLCK).

The protein resides in the membrane. The enzyme catalyses S-ubiquitinyl-[E2 ubiquitin-conjugating enzyme]-L-cysteine + [acceptor protein]-L-lysine = [E2 ubiquitin-conjugating enzyme]-L-cysteine + N(6)-ubiquitinyl-[acceptor protein]-L-lysine.. Its pathway is protein modification; protein ubiquitination. Its function is as follows. Mediates E2-dependent protein ubiquitination. The protein is E3 ubiquitin-protein ligase At1g63170 of Arabidopsis thaliana (Mouse-ear cress).